The following is a 1074-amino-acid chain: Topoisomerase 1-associated factor 1 (1074 aa).

2 disordered regions span residues 572–595 (NTHK…QRKI) and 936–1074 (EEPP…DRET). Composition is skewed to basic residues over residues 948 to 962 (LLRR…RRRS) and 978 to 991 (GHQH…KRAK). The span at 1014 to 1031 (EATRRFFENEERLRREMD) shows a compositional bias: basic and acidic residues. The span at 1046–1055 (VKRKRGKKNG) shows a compositional bias: basic residues.

This sequence belongs to the timeless family.

The protein localises to the nucleus. Its function is as follows. Involved in chromosome segregation during meiosis and DNA damage repair. This Cryptococcus neoformans var. neoformans serotype D (strain JEC21 / ATCC MYA-565) (Filobasidiella neoformans) protein is Topoisomerase 1-associated factor 1 (TOF1).